The chain runs to 309 residues: ADP-L-glycero-D-manno-heptose-6-epimerase (309 aa).

NADP(+)-binding positions include 10–11 (FI), 31–32 (DN), lysine 38, lysine 53, 75–79 (EGACS), and asparagine 92. The active-site Proton acceptor is tyrosine 140. Residue lysine 144 coordinates NADP(+). Position 169 (asparagine 169) interacts with substrate. Residues valine 170 and lysine 178 each coordinate NADP(+). Lysine 178 serves as the catalytic Proton acceptor. Substrate-binding positions include serine 180, histidine 187, 201–204 (FEGS), arginine 209, and tyrosine 272.

It belongs to the NAD(P)-dependent epimerase/dehydratase family. HldD subfamily. In terms of assembly, homopentamer. Requires NADP(+) as cofactor.

It carries out the reaction ADP-D-glycero-beta-D-manno-heptose = ADP-L-glycero-beta-D-manno-heptose. It functions in the pathway nucleotide-sugar biosynthesis; ADP-L-glycero-beta-D-manno-heptose biosynthesis; ADP-L-glycero-beta-D-manno-heptose from D-glycero-beta-D-manno-heptose 7-phosphate: step 4/4. Catalyzes the interconversion between ADP-D-glycero-beta-D-manno-heptose and ADP-L-glycero-beta-D-manno-heptose via an epimerization at carbon 6 of the heptose. The sequence is that of ADP-L-glycero-D-manno-heptose-6-epimerase from Enterobacter sp. (strain 638).